Consider the following 512-residue polypeptide: Dihydroniloticin synthase CYP71CD2 (512 aa).

The helical transmembrane segment at 1 to 21 (MNLQLDYFSITSFLVFLVVLF) threads the bilayer. Cysteine 449 provides a ligand contact to heme.

It belongs to the cytochrome P450 family. The cofactor is heme.

The protein resides in the membrane. It catalyses the reaction tirucalla-7,24-dien-3beta-ol + 2 reduced [NADPH--hemoprotein reductase] + 2 O2 = dihydroniloticin + 2 oxidized [NADPH--hemoprotein reductase] + 2 H2O + 2 H(+). It participates in secondary metabolite biosynthesis; terpenoid biosynthesis. In terms of biological role, monooxygenase involved in the biosynthesis of limonoids triterpene natural products such as azadirachtin, an antifeedant widely used as bioinsecticide, and possessing many medicinal applications including anti-tumoral, anti-malarial, anti-rheumatic, antibacterial, anti-inflammatory, anti-pyretic and diuretic effects. Catalyzes the conversion of tirucalladienol to dihydroniloticin. This chain is Dihydroniloticin synthase CYP71CD2, found in Azadirachta indica (Neem tree).